The sequence spans 338 residues: Lipoate-protein ligase A (338 aa).

Positions Pro29–Val216 constitute a BPL/LPL catalytic domain. ATP contacts are provided by residues Arg71, Gly76–Phe79, and Lys134. Lys134 lines the (R)-lipoate pocket.

It belongs to the LplA family. As to quaternary structure, monomer.

Its subcellular location is the cytoplasm. The catalysed reaction is L-lysyl-[lipoyl-carrier protein] + (R)-lipoate + ATP = N(6)-[(R)-lipoyl]-L-lysyl-[lipoyl-carrier protein] + AMP + diphosphate + H(+). Its pathway is protein modification; protein lipoylation via exogenous pathway; protein N(6)-(lipoyl)lysine from lipoate: step 1/2. It participates in protein modification; protein lipoylation via exogenous pathway; protein N(6)-(lipoyl)lysine from lipoate: step 2/2. Its function is as follows. Catalyzes both the ATP-dependent activation of exogenously supplied lipoate to lipoyl-AMP and the transfer of the activated lipoyl onto the lipoyl domains of lipoate-dependent enzymes. The chain is Lipoate-protein ligase A from Klebsiella pneumoniae subsp. pneumoniae (strain ATCC 700721 / MGH 78578).